The following is a 91-amino-acid chain: DNA-directed RNA polymerase subunit omega (91 aa).

The protein belongs to the RNA polymerase subunit omega family. The RNAP catalytic core consists of 2 alpha, 1 beta, 1 beta' and 1 omega subunit. When a sigma factor is associated with the core the holoenzyme is formed, which can initiate transcription. The rRNA transcription and antitermination complex (rrnTAC) consists of RNAP, NusA, NusB, NusE (rpsJ), NusG, SubB, ribosomal protein S4, DNA and precursor rRNA; S4 is more flexible than other subunits.

The catalysed reaction is RNA(n) + a ribonucleoside 5'-triphosphate = RNA(n+1) + diphosphate. Promotes RNA polymerase (RNAP) assembly. Latches the N- and C-terminal regions of the beta' subunit thereby facilitating its interaction with the beta and alpha subunits. Functionally, part of the processive rRNA transcription and antitermination complex (rrnTAC). The complex forms an RNA-chaperone ring around the RNA exit tunnel of RNAP. It supports rapid transcription and antitermination of rRNA operons, cotranscriptional rRNA folding, and annealing of distal rRNA regions to allow correct ribosome biogenesis. The chain is DNA-directed RNA polymerase subunit omega (rpoZ) from Escherichia coli (strain K12).